A 175-amino-acid polypeptide reads, in one-letter code: Putative carbonic anhydrase-like protein YbcF (175 aa).

Belongs to the beta-class carbonic anhydrase family.

The polypeptide is Putative carbonic anhydrase-like protein YbcF (ybcF) (Bacillus subtilis (strain 168)).